We begin with the raw amino-acid sequence, 1087 residues long: Voltage-gated inwardly rectifying potassium channel KCNH3 (1087 aa).

The Cytoplasmic segment spans residues Met1–Asp228. In terms of domain architecture, PAS spans Ile18 to His90. A PAC domain is found at Phe93 to Trp145. The span at Lys137–Gly150 shows a compositional bias: basic and acidic residues. The disordered stretch occupies residues Lys137–Lys161. The chain crosses the membrane as a helical span at residues Gly229–Ser249. Residues Thr250–Gly259 are Extracellular-facing. A helical transmembrane segment spans residues Pro260–Phe280. At Arg281–Tyr302 the chain is on the cytoplasmic side. A helical transmembrane segment spans residues Val303 to Phe323. Residues Lys324–Ala331 lie on the Extracellular side of the membrane. Residues His332–Tyr352 form a helical; Voltage-sensor membrane-spanning segment. Residues Ser353 to Thr361 are Cytoplasmic-facing. A helical membrane pass occupies residues Leu362 to Gly382. Residues Gln383 to Ile456 are Extracellular-facing. The segment at Ser416–Ser436 is disordered. Residues Gly419–Ser431 show a composition bias toward low complexity. Asn421, Asn428, and Asn439 each carry an N-linked (GlcNAc...) asparagine glycan. The segment at residues Thr457 to Asn477 is an intramembrane region (pore-forming). A Selectivity filter motif is present at residues Ser468 to Asn473. Residues Thr478–Lys482 lie on the Extracellular side of the membrane. A helical transmembrane segment spans residues Ile483 to Val503. Over Thr504–Val1087 the chain is Cytoplasmic. Residue Leu585–Arg700 coordinates a nucleoside 3',5'-cyclic phosphate. Disordered stretches follow at residues Glu733 to Pro813 and Leu975 to Pro1061. The span at Thr776–Pro788 shows a compositional bias: basic residues.

The protein belongs to the potassium channel family. H (Eag) (TC 1.A.1.20) subfamily. Kv12.2/KCNH3 sub-subfamily. In terms of assembly, the potassium channel is probably composed of a homo- or heterotetrameric complex of pore-forming alpha subunits that can associate with modulating beta subunits. Interacts with KCNE1 and KCNE3; these interactions regulate KCNH3 trafficking to the plasma membrane and its subsequent voltage-gated potassium channel activity. N-glycosylated. N-glycosylation mediates traffick to the cell membrane but is not necessary for voltage-gated potassium channel activity. Highly expressed in adult and embryonic brain, in particular in cerebellum, brain stem, hippocampus, cortex and striatum. Also found in pituitary.

It localises to the cell membrane. The catalysed reaction is K(+)(in) = K(+)(out). Its function is as follows. Pore-forming (alpha) subunit of a voltage-gated inwardly rectifying potassium channel. Charactherized by a fast rate of activation during depolarization followed by a rapid inactivation at much more depolarized value causing inward rectification due to a C-type inactivation mechanism. Exhibits a rapid recovery from inactivation. The chain is Voltage-gated inwardly rectifying potassium channel KCNH3 from Rattus norvegicus (Rat).